The following is a 352-amino-acid chain: MRPLPDQSAFEDKSELVSKKQKNEDENNENRSPETPRTPKVCPKTPTKTPLRTPTKNQAGVQFLTQKKRTKSCSSHFEYINQIGEGSFAKVYKARSFVDGRLYAVKKSKKPIWETSERNQHIQEIENGMKLGHHNNIAQVMCAWEEGGHIFIQMELCERGNLKDALNLAVQEEGGLGKLPEYMIWQYLCDIANGLSHVHEKGIMHLDIKPENLLFSNDGVLKIGDFGVCSTTTGGDDSEGDQIYMAPELLNDIHTPSADIFSLGITLYEMATNYNLPQKGQWWRNLREGKIPFPENDDSISQDLKDLIILMMNPDHTKRITIQSLLKYDKLQSVITLKRSTSTLYRLQRKLF.

Residues 1–57 (MRPLPDQSAFEDKSELVSKKQKNEDENNENRSPETPRTPKVCPKTPTKTPLRTPTKN) form a disordered region. The span at 10–34 (FEDKSELVSKKQKNEDENNENRSPE) shows a compositional bias: basic and acidic residues. The span at 38 to 56 (TPKVCPKTPTKTPLRTPTK) shows a compositional bias: low complexity. One can recognise a Protein kinase domain in the interval 77–331 (FEYINQIGEG…IQSLLKYDKL (255 aa)). Residues 83–91 (IGEGSFAKV) and lysine 106 each bind ATP. Catalysis depends on aspartate 207, which acts as the Proton acceptor. Mg(2+) contacts are provided by asparagine 212 and aspartate 225.

Belongs to the protein kinase superfamily. Ser/Thr protein kinase family. WEE1 subfamily.

The enzyme catalyses L-seryl-[protein] + ATP = O-phospho-L-seryl-[protein] + ADP + H(+). It carries out the reaction L-threonyl-[protein] + ATP = O-phospho-L-threonyl-[protein] + ADP + H(+). The protein is Probable protein kinase DDB_G0291842 of Dictyostelium discoideum (Social amoeba).